We begin with the raw amino-acid sequence, 201 residues long: UPF0301 protein Atu0781 (201 aa).

This sequence belongs to the UPF0301 (AlgH) family.

In Agrobacterium fabrum (strain C58 / ATCC 33970) (Agrobacterium tumefaciens (strain C58)), this protein is UPF0301 protein Atu0781.